The primary structure comprises 206 residues: Urease accessory protein UreG (206 aa).

13-20 (GPVGSGKT) provides a ligand contact to GTP.

Belongs to the SIMIBI class G3E GTPase family. UreG subfamily. As to quaternary structure, homodimer. UreD, UreF and UreG form a complex that acts as a GTP-hydrolysis-dependent molecular chaperone, activating the urease apoprotein by helping to assemble the nickel containing metallocenter of UreC. The UreE protein probably delivers the nickel.

It is found in the cytoplasm. Its function is as follows. Facilitates the functional incorporation of the urease nickel metallocenter. This process requires GTP hydrolysis, probably effectuated by UreG. This chain is Urease accessory protein UreG, found in Natronomonas pharaonis (strain ATCC 35678 / DSM 2160 / CIP 103997 / JCM 8858 / NBRC 14720 / NCIMB 2260 / Gabara) (Halobacterium pharaonis).